An 860-amino-acid chain; its full sequence is Leucine--tRNA ligase (860 aa).

The 'HIGH' region signature appears at 42 to 52 (PYPSGRLHMGH). A 'KMSKS' region motif is present at residues 619–623 (KMSKS). Lys622 provides a ligand contact to ATP.

The protein belongs to the class-I aminoacyl-tRNA synthetase family.

Its subcellular location is the cytoplasm. The enzyme catalyses tRNA(Leu) + L-leucine + ATP = L-leucyl-tRNA(Leu) + AMP + diphosphate. This is Leucine--tRNA ligase from Salmonella agona (strain SL483).